We begin with the raw amino-acid sequence, 508 residues long: Light-independent protochlorophyllide reductase subunit B (508 aa).

Aspartate 36 contributes to the [4Fe-4S] cluster binding site. The active-site Proton donor is aspartate 294. 429-430 (GM) provides a ligand contact to substrate.

Belongs to the ChlB/BchB/BchZ family. As to quaternary structure, protochlorophyllide reductase is composed of three subunits; ChlL, ChlN and ChlB. Forms a heterotetramer of two ChlB and two ChlN subunits. It depends on [4Fe-4S] cluster as a cofactor.

It catalyses the reaction chlorophyllide a + oxidized 2[4Fe-4S]-[ferredoxin] + 2 ADP + 2 phosphate = protochlorophyllide a + reduced 2[4Fe-4S]-[ferredoxin] + 2 ATP + 2 H2O. It participates in porphyrin-containing compound metabolism; chlorophyll biosynthesis (light-independent). Functionally, component of the dark-operative protochlorophyllide reductase (DPOR) that uses Mg-ATP and reduced ferredoxin to reduce ring D of protochlorophyllide (Pchlide) to form chlorophyllide a (Chlide). This reaction is light-independent. The NB-protein (ChlN-ChlB) is the catalytic component of the complex. This Nostoc punctiforme (strain ATCC 29133 / PCC 73102) protein is Light-independent protochlorophyllide reductase subunit B.